The primary structure comprises 307 residues: Nitrogenase iron protein 2 (307 aa).

13 to 20 serves as a coordination point for ATP; the sequence is GKGGIGKS. Residue C101 coordinates [4Fe-4S] cluster. Position 104 is an ADP-ribosylarginine; by dinitrogenase reductase ADP-ribosyltransferase (R104). A [4Fe-4S] cluster-binding site is contributed by C135. A disordered region spans residues 285–307; that stretch reads QLTETDKAAKESEKKQEDAEGEA.

It belongs to the NifH/BchL/ChlL family. In terms of assembly, homodimer. It depends on [4Fe-4S] cluster as a cofactor. In terms of processing, the reversible ADP-ribosylation of Arg-104 inactivates the nitrogenase reductase and regulates nitrogenase activity.

The catalysed reaction is N2 + 8 reduced [2Fe-2S]-[ferredoxin] + 16 ATP + 16 H2O = H2 + 8 oxidized [2Fe-2S]-[ferredoxin] + 2 NH4(+) + 16 ADP + 16 phosphate + 6 H(+). Functionally, the key enzymatic reactions in nitrogen fixation are catalyzed by the nitrogenase complex, which has 2 components: the iron protein and the molybdenum-iron protein. This is Nitrogenase iron protein 2 (nifH2) from Mastigocladus laminosus (Fischerella sp.).